Consider the following 302-residue polypeptide: 4-diphosphocytidyl-2-C-methyl-D-erythritol kinase (302 aa).

The active site involves lysine 32. 115 to 125 (PMGGGVGGGSS) lines the ATP pocket. The active site involves aspartate 157.

It belongs to the GHMP kinase family. IspE subfamily.

It catalyses the reaction 4-CDP-2-C-methyl-D-erythritol + ATP = 4-CDP-2-C-methyl-D-erythritol 2-phosphate + ADP + H(+). It functions in the pathway isoprenoid biosynthesis; isopentenyl diphosphate biosynthesis via DXP pathway; isopentenyl diphosphate from 1-deoxy-D-xylulose 5-phosphate: step 3/6. In terms of biological role, catalyzes the phosphorylation of the position 2 hydroxy group of 4-diphosphocytidyl-2C-methyl-D-erythritol. This Actinobacillus succinogenes (strain ATCC 55618 / DSM 22257 / CCUG 43843 / 130Z) protein is 4-diphosphocytidyl-2-C-methyl-D-erythritol kinase.